Here is a 397-residue protein sequence, read N- to C-terminus: Ribosomal RNA large subunit methyltransferase I (397 aa).

The region spanning 2–80 is the PUA domain; it reads SAAIYLVKGR…QDVNRAFFVK (79 aa).

This sequence belongs to the methyltransferase superfamily. RlmI family.

The protein localises to the cytoplasm. It carries out the reaction cytidine(1962) in 23S rRNA + S-adenosyl-L-methionine = 5-methylcytidine(1962) in 23S rRNA + S-adenosyl-L-homocysteine + H(+). In terms of biological role, specifically methylates the cytosine at position 1962 (m5C1962) of 23S rRNA. In Vibrio vulnificus (strain YJ016), this protein is Ribosomal RNA large subunit methyltransferase I.